A 347-amino-acid polypeptide reads, in one-letter code: DNA-directed RNA polymerase subunit alpha (347 aa).

An alpha N-terminal domain (alpha-NTD) region spans residues 1–243 (MLIKQGDRLI…DQISVFINFD (243 aa)). The interval 260-347 (VNENLFKGID…EWKRKQQNEA (88 aa)) is alpha C-terminal domain (alpha-CTD).

It belongs to the RNA polymerase alpha chain family. As to quaternary structure, homodimer. The RNAP catalytic core consists of 2 alpha, 1 beta, 1 beta' and 1 omega subunit. When a sigma factor is associated with the core the holoenzyme is formed, which can initiate transcription.

It carries out the reaction RNA(n) + a ribonucleoside 5'-triphosphate = RNA(n+1) + diphosphate. Its function is as follows. DNA-dependent RNA polymerase catalyzes the transcription of DNA into RNA using the four ribonucleoside triphosphates as substrates. This is DNA-directed RNA polymerase subunit alpha from Nitratidesulfovibrio vulgaris (strain DSM 19637 / Miyazaki F) (Desulfovibrio vulgaris).